Here is a 357-residue protein sequence, read N- to C-terminus: Protein RecA (357 aa).

ATP is bound at residue 69–76 (GPESSGKT). Positions 337–357 (SANSVAKNNEDDEDEDVEEEE) are disordered. The span at 346–357 (EDDEDEDVEEEE) shows a compositional bias: acidic residues.

The protein belongs to the RecA family.

The protein localises to the cytoplasm. Can catalyze the hydrolysis of ATP in the presence of single-stranded DNA, the ATP-dependent uptake of single-stranded DNA by duplex DNA, and the ATP-dependent hybridization of homologous single-stranded DNAs. It interacts with LexA causing its activation and leading to its autocatalytic cleavage. This chain is Protein RecA, found in Nostoc sp. (strain PCC 7120 / SAG 25.82 / UTEX 2576).